The chain runs to 365 residues: Succinate--CoA ligase [ADP-forming] subunit beta (365 aa).

In terms of domain architecture, ATP-grasp spans K9 to F230. Residues K45, G52–G54, E90, I93, and E98 each bind ATP. Mg(2+) contacts are provided by N190 and D203. Substrate is bound by residues N244 and G300–T302.

Belongs to the succinate/malate CoA ligase beta subunit family. In terms of assembly, heterotetramer of two alpha and two beta subunits. Requires Mg(2+) as cofactor.

It catalyses the reaction succinate + ATP + CoA = succinyl-CoA + ADP + phosphate. It carries out the reaction GTP + succinate + CoA = succinyl-CoA + GDP + phosphate. It functions in the pathway carbohydrate metabolism; tricarboxylic acid cycle; succinate from succinyl-CoA (ligase route): step 1/1. In terms of biological role, succinyl-CoA synthetase functions in the citric acid cycle (TCA), coupling the hydrolysis of succinyl-CoA to the synthesis of either ATP or GTP and thus represents the only step of substrate-level phosphorylation in the TCA. The beta subunit provides nucleotide specificity of the enzyme and binds the substrate succinate, while the binding sites for coenzyme A and phosphate are found in the alpha subunit. This Methanothermobacter thermautotrophicus (strain ATCC 29096 / DSM 1053 / JCM 10044 / NBRC 100330 / Delta H) (Methanobacterium thermoautotrophicum) protein is Succinate--CoA ligase [ADP-forming] subunit beta.